The following is a 1300-amino-acid chain: CRISPR-associated endonuclease Cas12a (1300 aa).

Residues 1-24 (MSIYQEFVNKYSLSKTLRFELIPQ) are wedge region 1. 2 recognition domain regions span residues 25–339 (GKTL…SFVI) and 340–591 (DKLE…QKPY). Binds crRNA alone and in crRNA-target DNA heteroduplex regions lie at residues 47-51 (YKKAK) and 182-186 (FHENR). The binds DNA in crRNA-target DNA heteroduplex stretch occupies residues 301–305 (NEYIN). 2 binds crRNA in crRNA-target DNA heteroduplex regions span residues 326–329 (KQIL) and 538–541 (HKLK). Residues 591–595 (YSDEK) are binds crRNA. The tract at residues 592–662 (SDEKFKLNFE…GYKKIVYKLL (71 aa)) is wedge region 2. The tract at residues 662 to 679 (LPGANKMLPKVFFSAKSI) is LKL, important for PAM recognition and DNA unwinding. The tract at residues 663–762 (PGANKMLPKV…FYREVENQGY (100 aa)) is PAM-interacting domain (PI). Residues 671–677 (KVFFSAK) are binds DNA protospacer adjacent motif (PAM) on target DNA. Residues 692-704 (RNHSTHTKNGSPQ) are binds single-strand non-target DNA. The tract at residues 763 to 892 (KLTFENISES…PITINFKSSG (130 aa)) is wedge region 3. 2 binds crRNA regions span residues 791–794 (KDFS) and 803–804 (LH). Active-site for pre-crRNA processing residues include His843, Lys852, and Lys869. Binds crRNA stretches follow at residues 851–853 (NKN) and 865–873 (YDLIKDKRF). The tract at residues 893–953 (ANKFNDEINL…IGNDRMKTNY (61 aa)) is ruvC-I. The active-site For DNase activity of RuvC domain is the Asp917. Residues 954-971 (HDKLAAIEKDRDSARKDW) are bridge helix. Residues 972-1078 (KKINNIKEMK…KQTGIIYYVP (107 aa)) are ruvC-II. Residue Glu1006 is the For DNase activity of RuvC domain of the active site. The segment at 1079–1254 (AGFTSKICPV…QAPKNMPQDA (176 aa)) is nuclease domain. The For DNase activity of RuvC domain role is filled by Asp1255. The ruvC-III stretch occupies residues 1255-1300 (DANGAYHIGLKGLMLLGRIKNNQEGKKLNLVIKNEEYFEFVQNRNN).

The protein belongs to the CRISPR-associated endonuclease Cas12a family. In terms of assembly, might be a homodimer. Might be a monomer. Ca(2+) is required as a cofactor. The cofactor is Mg(2+).

The catalysed reaction is Endonucleolytic cleavage to 5'-phosphodinucleotide and 5'-phosphooligonucleotide end-products.. It carries out the reaction RNA = a 5'-hydroxy-ribonucleotide + n nucleoside-2',3'-cyclophosphates.. Its function is as follows. CRISPR (clustered regularly interspaced short palindromic repeat), is an adaptive immune system that provides protection against mobile genetic elements (viruses, transposable elements and conjugative plasmids). CRISPR clusters contain sequences complementary to antecedent mobile elements and target invading nucleic acids. CRISPR clusters are transcribed and processed into CRISPR RNA (crRNA). Has endonuclease activity on pre-crRNA and dsDNA, using different active sites. A single-RNA guided endonuclease that is also capable of guiding crRNA processing; correct processing of pre-crRNA requires only this protein and the CRISPR locus. pre-crRNA processing proceeds by an intramolecular nucleophilic attack on the scissile phosphate by the 2'-OH of the upstream ribonucleotide, the divalent cation (which is bound by the crRNA) is probably required for ordering the crRNA pseudoknot and/or increasing RNA binding. RNA mutagenesis studies show pre-crRNA cleavage is highly sequence- and structure-specific. Forms a complex with crRNA and complementary dsDNA, where the crRNA displaces the non-target DNA strand and directs endonucleolytic cleavage of both strands of the DNA. Cleavage results in staggered 5-base 5' overhangs 14-18 and 21-23 bases downstream of the PAM (protospacer adjacent motif) on the non-target and target strands respectively. Both target and non-target strand DNA are probably independently cleaved in the same active site. When this protein is expressed in E.coli it prevents plasmids homologous to the first CRISPR spacer from transforming, formally showing it is responsible for plasmid immunity. This chain is CRISPR-associated endonuclease Cas12a, found in Francisella tularensis subsp. novicida (strain U112).